The primary structure comprises 97 residues: Small integral membrane protein 8 (97 aa).

Positions 1-22 (MSSAPEPPAFKKEPPKEKDLGN) are disordered. A compositionally biased stretch (basic and acidic residues) spans 9 to 20 (AFKKEPPKEKDL). Residues 48-70 (PVMAFGLITISLCVAYIGYLHAT) traverse the membrane as a helical segment.

The protein belongs to the SMIM8 family.

The protein localises to the membrane. This is Small integral membrane protein 8 (SMIM8) from Bos taurus (Bovine).